The sequence spans 649 residues: Nitrosuccinic acid synthase npaA (649 aa).

The protein belongs to the nitrosuccinic acid synthase family. It depends on FAD as a cofactor.

The catalysed reaction is L-aspartate + 3 NADPH + 3 O2 + 2 H(+) = 2-nitrobutanedioate + 3 NADP(+) + 4 H2O. It participates in mycotoxin biosynthesis. Its function is as follows. Nitrosuccinic acid synthase; part of the gene cluster that mediates the biosynthesis of the deadly neurotoxic nitroalkane 3-nitropropanoic acid (3-NPA) that acts as an antimetabolite of succinate and irreversibly inhibits succinate dehydrogenase and disrupts mitochondrial oxidative phosphorylation. NpaA catalyzes the iterative oxidation of L-aspartic acid to nitrosuccinic acid (2-nitrobutanedioate). Alternative amino acid substrates such as L-glutamate and D-aspartate are not accepted by npaA as a substrate, showing the strict substrate specificity toward L-aspartate. The nitrosuccinic acid decarboxylase npaB then facilitates decarboxylation of Nitrosuccinic acid to produce 3-NPA. This Aspergillus oryzae (strain ATCC 42149 / RIB 40) (Yellow koji mold) protein is Nitrosuccinic acid synthase npaA.